Reading from the N-terminus, the 156-residue chain is Lipoprotein signal peptidase (156 aa).

A run of 4 helical transmembrane segments spans residues 8–28, 39–59, 67–87, and 99–119; these read IYINIIFFIITVDFYSKKWIL, VFFILNLFHVHNFGAAFSILS, YFLLIFSIIIILAIIKIMIKF, and SLILAGAIGNLIDRINYGFVI. Catalysis depends on residues Asp-120 and Asp-138. The helical transmembrane segment at 129–149 threads the bilayer; it reads WHFATFNIADFSIFIGMIMII.

This sequence belongs to the peptidase A8 family.

It localises to the cell inner membrane. The enzyme catalyses Release of signal peptides from bacterial membrane prolipoproteins. Hydrolyzes -Xaa-Yaa-Zaa-|-(S,diacylglyceryl)Cys-, in which Xaa is hydrophobic (preferably Leu), and Yaa (Ala or Ser) and Zaa (Gly or Ala) have small, neutral side chains.. It participates in protein modification; lipoprotein biosynthesis (signal peptide cleavage). Its function is as follows. This protein specifically catalyzes the removal of signal peptides from prolipoproteins. The protein is Lipoprotein signal peptidase of Buchnera aphidicola subsp. Schizaphis graminum (strain Sg).